The following is a 300-amino-acid chain: Jacalin-related lectin 32 (300 aa).

At Ala2 the chain carries N-acetylalanine. Jacalin-type lectin domains lie at 2 to 146 (AQKV…YFTT) and 154 to 297 (AKKL…HILP).

It belongs to the jacalin lectin family.

In terms of biological role, involved in gametophytic development. This Arabidopsis thaliana (Mouse-ear cress) protein is Jacalin-related lectin 32 (JAL32).